Consider the following 161-residue polypeptide: Protein-export protein SecB (161 aa).

It belongs to the SecB family. In terms of assembly, homotetramer, a dimer of dimers. One homotetramer interacts with 1 SecA dimer.

It localises to the cytoplasm. In terms of biological role, one of the proteins required for the normal export of preproteins out of the cell cytoplasm. It is a molecular chaperone that binds to a subset of precursor proteins, maintaining them in a translocation-competent state. It also specifically binds to its receptor SecA. In Pseudomonas putida (strain ATCC 700007 / DSM 6899 / JCM 31910 / BCRC 17059 / LMG 24140 / F1), this protein is Protein-export protein SecB.